We begin with the raw amino-acid sequence, 2360 residues long: Nucleoprotein TPR (2360 aa).

Ala2 bears the N-acetylalanine mark. A sufficient for interaction with TPR region spans residues 3 to 13 (AVLQQVLERPE). The tract at residues 14-117 (LNKLPKSTQN…GIQSQFTRAK (104 aa)) is necessary for interaction with HSF1. Residues 24 to 370 (KLEKFLAEQQ…SATKRKGAIL (347 aa)) are a coiled coil. Residues Lys252, Lys312, and Lys345 each carry the N6-acetyllysine modification. Position 379 is a phosphoserine (Ser379). Residues 423–603 (LDEIVKEVEA…RESRQHQMQL (181 aa)) adopt a coiled-coil conformation. N6-acetyllysine occurs at positions 428, 457, and 477. Positions 437 to 513 (LKRQREEYER…LMELEEARGN (77 aa)) are necessary for association to the NPC. A phosphoserine mark is found at Ser522, Ser523, and Ser632. A coiled-coil region spans residues 664–1172 (ETIEAKAALK…IEKLSDKVVT (509 aa)). 4 positions are modified to N6-acetyllysine: Lys713, Lys723, Lys748, and Lys755. The span at 915–924 (LASQSTQRTG) shows a compositional bias: polar residues. The interval 915-939 (LASQSTQRTGKGQPGDRDDVDDLKS) is disordered. Residues 928-939 (PGDRDDVDDLKS) are compositionally biased toward basic and acidic residues. 2 positions are modified to phosphoserine: Ser1180 and Ser1185. 2 coiled-coil regions span residues 1215-1420 (EVAQ…LDAK) and 1472-1629 (VQEM…QRDE). Residues 1218 to 1320 (QVESLRYRQR…NAELSEKSGM (103 aa)) are necessary for interaction with HSF1. Disordered regions lie at residues 1479-1520 (KDNL…TAQL) and 1618-1673 (EHQE…PTPV). Basic and acidic residues-rich tracts occupy residues 1503–1512 (LSEKETEARS) and 1618–1630 (EHQE…RDEP). Residues 1632 to 1651 (EPTNKAPEQQRQITLKTTPA) are compositionally biased toward polar residues. The residue at position 1689 (Lys1689) is an N6-acetyllysine. Phosphothreonine is present on Thr1691. The segment covering 1801-1826 (QSSPVERPSTSTAVFGTVSATPSSSL) has biased composition (polar residues). The interval 1801–2122 (QSSPVERPST…TPGIGGMQQH (322 aa)) is disordered. A sufficient and essential for mediating its nuclear import region spans residues 1811-1866 (STAVFGTVSATPSSSLPKRAREEEEDSTIEAGDQVSDDTVEMPLPKKLKTVTPVGT). The segment covering 1866-1880 (TEEEVMAEESTDGEA) has biased composition (acidic residues). Over residues 1881 to 1892 (ETQTYNQDSQDS) the composition is skewed to polar residues. The residue at position 1892 (Ser1892) is a Phosphoserine. Residues 1923–1934 (QSDQQTTSSQDG) are compositionally biased toward low complexity. 2 stretches are compositionally biased toward acidic residues: residues 1945 to 1986 (DSDD…EDSN) and 1996 to 2017 (DGYE…ETEE). The segment covering 2023 to 2061 (ESNQRAADSQNSGEGNTSAAESSFSQEVAREQQPTSASE) has biased composition (polar residues). Residues Ser2031, Ser2034, Ser2045, Ser2047, and Ser2070 each carry the phosphoserine modification. 2 positions are modified to omega-N-methylarginine: Arg2103 and Arg2108. 2 positions are modified to phosphothreonine: Thr2113 and Thr2134. Phosphoserine is present on Ser2152. At Arg2160 the chain carries Omega-N-methylarginine. The span at 2224 to 2241 (ESTTSDASEHASQSVPMV) shows a compositional bias: polar residues. The interval 2224–2360 (ESTTSDASEH…RGGINRGNIN (137 aa)) is disordered. Over residues 2242–2254 (TTSTGTLSTTNET) the composition is skewed to low complexity. Acidic residues-rich tracts occupy residues 2256–2269 (AGDD…ETES) and 2282–2296 (SQQE…DESD). Positions 2297-2317 (LPSTSQDPPSSSSVDTSSSQP) are enriched in low complexity. An asymmetric dimethylarginine mark is found at Arg2340, Arg2342, and Arg2351. Residues 2349–2360 (GGRGGINRGNIN) show a composition bias toward gly residues.

The protein belongs to the TPR family. In terms of assembly, homodimer. Part of the nuclear pore complex (NPC). Associates with the XPO1/CRM1-mediated nuclear export complex, the Importin alpha/Importin beta receptor and the dynein 1 complex. Interacts (via C-terminal domain) with the KPNB1; the interaction occurs in a RanGTP-dependent manner. Interacts (via C-terminal region and phosphorylated form) with MAPK1/ERK2 (via phosphorylated form); the interaction requires dimerization of MAPK1/ERK2 and increases following EGF stimulation. Interacts with MAPK3/ERK1; the interaction increases following EGF stimulation. Interacts (via coiled coil region) with NUP153; the interaction is direct. Interacts with HSF1; the interaction increases in a stress-responsive manner and stimulates export of stress-induced HSP70 mRNA. Interacts with huntingtin/HTT; the interaction is inhibited by aggregated huntingtin/HTT forms with expanded polyglutamine stretch. Interacts with MAD1L1 (via N-terminal region), MAD2L1, and TTK; the interactions occurs in a microtubule-independent manner. Interacts (via middle region) with DYNLL1. Interacts with DCTN1, dynein, NUP153 and tubulin. Interacts with IFI204 (via C-terminal region). Interacts with IFI203. Interacts with MTA1. Interacts with ZC3HC1; this interaction mediates ZC3HC1 nuclear envelopes (NE)-association but also required for proper positioning of a substantial amount of TPR at the nuclear basket (NB). Post-translationally, phosphorylated. Phosphorylation occurs on serine and threonine residues (comprised in the C-terminal region) by MAPK1/ERK2 and stabilizes the interaction between these two proteins.

Its subcellular location is the nucleus. It is found in the nucleus membrane. It localises to the nucleus envelope. The protein resides in the nuclear pore complex. The protein localises to the cytoplasm. Its subcellular location is the cytoskeleton. It is found in the spindle. It localises to the chromosome. The protein resides in the centromere. The protein localises to the kinetochore. In terms of biological role, component of the nuclear pore complex (NPC), a complex required for the trafficking across the nuclear envelope. Functions as a scaffolding element in the nuclear phase of the NPC essential for normal nucleocytoplasmic transport of proteins and mRNAs, plays a role in the establishment of nuclear-peripheral chromatin compartmentalization in interphase, and in the mitotic spindle checkpoint signaling during mitosis. Involved in the quality control and retention of unspliced mRNAs in the nucleus; in association with NUP153, regulates the nuclear export of unspliced mRNA species bearing constitutive transport element (CTE) in a NXF1- and KHDRBS1-independent manner. Negatively regulates both the association of CTE-containing mRNA with large polyribosomes and translation initiation. Does not play any role in Rev response element (RRE)-mediated export of unspliced mRNAs. Implicated in nuclear export of mRNAs transcribed from heat shock gene promoters; associates both with chromatin in the HSP70 promoter and with mRNAs transcribed from this promoter under stress-induced conditions. Modulates the nucleocytoplasmic transport of activated MAPK1/ERK2 and huntingtin/HTT and may serve as a docking site for the XPO1/CRM1-mediated nuclear export complex. Also plays a role as a structural and functional element of the perinuclear chromatin distribution; involved in the formation and/or maintenance of NPC-associated perinuclear heterochromatin exclusion zones (HEZs). Finally, acts as a spatial regulator of the spindle-assembly checkpoint (SAC) response ensuring a timely and effective recruitment of spindle checkpoint proteins like MAD1L1 and MAD2L1 to unattached kinetochore during the metaphase-anaphase transition before chromosome congression. Its N-terminus is involved in activation of oncogenic kinases. Plays a role in the regulation of nuclear protein export. The polypeptide is Nucleoprotein TPR (Rattus norvegicus (Rat)).